We begin with the raw amino-acid sequence, 398 residues long: Putative molybdopterin biosynthesis protein MJ0666 (398 aa).

The protein belongs to the MoeA family.

The protein operates within cofactor biosynthesis; molybdopterin biosynthesis. This chain is Putative molybdopterin biosynthesis protein MJ0666, found in Methanocaldococcus jannaschii (strain ATCC 43067 / DSM 2661 / JAL-1 / JCM 10045 / NBRC 100440) (Methanococcus jannaschii).